Here is a 79-residue protein sequence, read N- to C-terminus: Acyl carrier protein (79 aa).

Residues 2–77 (SDIEARVRKI…SAIDYANTHQ (76 aa)) enclose the Carrier domain. O-(pantetheine 4'-phosphoryl)serine is present on Ser-37.

Belongs to the acyl carrier protein (ACP) family. 4'-phosphopantetheine is transferred from CoA to a specific serine of apo-ACP by AcpS. This modification is essential for activity because fatty acids are bound in thioester linkage to the sulfhydryl of the prosthetic group.

The protein localises to the cytoplasm. The protein operates within lipid metabolism; fatty acid biosynthesis. Functionally, carrier of the growing fatty acid chain in fatty acid biosynthesis. This is Acyl carrier protein from Verminephrobacter eiseniae (strain EF01-2).